The sequence spans 314 residues: Putative S-adenosyl-L-methionine-dependent methyltransferase MAP_0256 (314 aa).

S-adenosyl-L-methionine contacts are provided by residues Asp-132 and 161 to 162 (DL).

The protein belongs to the UPF0677 family.

Its function is as follows. Exhibits S-adenosyl-L-methionine-dependent methyltransferase activity. The polypeptide is Putative S-adenosyl-L-methionine-dependent methyltransferase MAP_0256 (Mycolicibacterium paratuberculosis (strain ATCC BAA-968 / K-10) (Mycobacterium paratuberculosis)).